Consider the following 354-residue polypeptide: Probable dual-specificity RNA methyltransferase RlmN (354 aa).

The active-site Proton acceptor is E94. One can recognise a Radical SAM core domain in the interval 103–332 (GRRRNTACLS…QEAGLEAAIR (230 aa)). The cysteines at positions 110 and 343 are disulfide-linked. The [4Fe-4S] cluster site is built by C117, C121, and C124. S-adenosyl-L-methionine-binding positions include 169 to 170 (GE), S201, 224 to 226 (SLH), and N300. The active-site S-methylcysteine intermediate is C343.

This sequence belongs to the radical SAM superfamily. RlmN family. [4Fe-4S] cluster is required as a cofactor.

Its subcellular location is the cytoplasm. The enzyme catalyses adenosine(2503) in 23S rRNA + 2 reduced [2Fe-2S]-[ferredoxin] + 2 S-adenosyl-L-methionine = 2-methyladenosine(2503) in 23S rRNA + 5'-deoxyadenosine + L-methionine + 2 oxidized [2Fe-2S]-[ferredoxin] + S-adenosyl-L-homocysteine. The catalysed reaction is adenosine(37) in tRNA + 2 reduced [2Fe-2S]-[ferredoxin] + 2 S-adenosyl-L-methionine = 2-methyladenosine(37) in tRNA + 5'-deoxyadenosine + L-methionine + 2 oxidized [2Fe-2S]-[ferredoxin] + S-adenosyl-L-homocysteine. In terms of biological role, specifically methylates position 2 of adenine 2503 in 23S rRNA and position 2 of adenine 37 in tRNAs. In Moorella thermoacetica (strain ATCC 39073 / JCM 9320), this protein is Probable dual-specificity RNA methyltransferase RlmN.